Here is a 726-residue protein sequence, read N- to C-terminus: Type VI secretion system spike protein VgrG1c (726 aa).

Residues Ala-502–Phe-522 are disordered. Positions Ser-507 to Thr-518 are enriched in low complexity.

It belongs to the VgrG protein family. As to quaternary structure, forms homomultimers. Part of the type VI secretion system (T6SS).

The protein resides in the secreted. Functionally, part of the H1 type VI secretion system (H1-T6SS) specialized secretion system, which delivers several virulence factors in both prokaryotic and eukaryotic cells during infection. Allows the delivery of the Tse5/RhsP1 toxin to target cells where it exerts its toxicity. This Pseudomonas aeruginosa (strain ATCC 15692 / DSM 22644 / CIP 104116 / JCM 14847 / LMG 12228 / 1C / PRS 101 / PAO1) protein is Type VI secretion system spike protein VgrG1c.